A 530-amino-acid polypeptide reads, in one-letter code: Autoinducer-2 kinase (530 aa).

It belongs to the FGGY kinase family.

Its subcellular location is the cytoplasm. The enzyme catalyses (S)-4,5-dihydroxypentane-2,3-dione + ATP = (2S)-2-hydroxy-3,4-dioxopentyl phosphate + ADP + H(+). Functionally, catalyzes the phosphorylation of autoinducer-2 (AI-2) to phospho-AI-2, which subsequently inactivates the transcriptional regulator LsrR and leads to the transcription of the lsr operon. Phosphorylates the ring-open form of (S)-4,5-dihydroxypentane-2,3-dione (DPD), which is the precursor to all AI-2 signaling molecules, at the C5 position. The polypeptide is Autoinducer-2 kinase (Yersinia pseudotuberculosis serotype O:1b (strain IP 31758)).